The sequence spans 331 residues: DNA-directed RNA polymerase subunit alpha (331 aa).

Residues 1–225 (MLDIAMPKLE…QYSSIIADFN (225 aa)) form an alpha N-terminal domain (alpha-NTD) region. An alpha C-terminal domain (alpha-CTD) region spans residues 243–331 (PSEIYDMPIE…AARLNDGSAE (89 aa)).

Belongs to the RNA polymerase alpha chain family. As to quaternary structure, homodimer. The RNAP catalytic core consists of 2 alpha, 1 beta, 1 beta' and 1 omega subunit. When a sigma factor is associated with the core the holoenzyme is formed, which can initiate transcription.

The enzyme catalyses RNA(n) + a ribonucleoside 5'-triphosphate = RNA(n+1) + diphosphate. In terms of biological role, DNA-dependent RNA polymerase catalyzes the transcription of DNA into RNA using the four ribonucleoside triphosphates as substrates. The polypeptide is DNA-directed RNA polymerase subunit alpha (Herpetosiphon aurantiacus (strain ATCC 23779 / DSM 785 / 114-95)).